A 473-amino-acid chain; its full sequence is Chromosomal replication initiator protein DnaA (473 aa).

Residues 1-73 (MTNIEQDRWS…LSCWQAEMPQ (73 aa)) form a domain I, interacts with DnaA modulators region. Positions 73 to 129 (QVHRVDLTVRTAMRCAAPAKDAPAHAEPRRDDGRPAPELRATAIAPVSATHEALGGS) are domain II. Positions 130 to 352 (PLDPRLTFGS…GAINRLLAHS (223 aa)) are domain III, AAA+ region. ATP contacts are provided by glycine 177, glycine 179, lysine 180, and threonine 181. Residues 353 to 473 (KLNAQPVTLE…VELLKRQLQE (121 aa)) are domain IV, binds dsDNA.

It belongs to the DnaA family. Oligomerizes as a right-handed, spiral filament on DNA at oriC.

Its subcellular location is the cytoplasm. Functionally, plays an essential role in the initiation and regulation of chromosomal replication. ATP-DnaA binds to the origin of replication (oriC) to initiate formation of the DNA replication initiation complex once per cell cycle. Binds the DnaA box (a 9 base pair repeat at the origin) and separates the double-stranded (ds)DNA. Forms a right-handed helical filament on oriC DNA; dsDNA binds to the exterior of the filament while single-stranded (ss)DNA is stabiized in the filament's interior. The ATP-DnaA-oriC complex binds and stabilizes one strand of the AT-rich DNA unwinding element (DUE), permitting loading of DNA polymerase. After initiation quickly degrades to an ADP-DnaA complex that is not apt for DNA replication. Binds acidic phospholipids. This is Chromosomal replication initiator protein DnaA from Rhodopseudomonas palustris (strain BisB18).